The following is a 162-amino-acid chain: MDKVNSCCCGVNAKPCCTDPNSGCCCVSKTDNCCKSDTKECCTGTGEGCKCVNCKCCKPQANCCCGVNAKPCCFDPNSGCCCVSKTNNCCKSDTKECCTGTGEGCKCTSCQCCKPVQQGCCCGDKAKACCTDPNSGCCCSNKANKCCDATSKQECQTCQCCK.

A propeptide spanning residues 1-2 is cleaved from the precursor; it reads MD.

The metallothioneins are involved in the cellular sequestration of toxic metal ions. This is Cadmium metallothionein (MTT1) from Tetrahymena thermophila.